Consider the following 556-residue polypeptide: F-box protein YDR131C (556 aa).

The F-box domain maps to 1–44; the sequence is MFDKLPYEIFKQIAWRIPQEDKISLTYVCKRSYESIIPFIYQNL.

In terms of assembly, interacts with SKP1. Component of the probable SCF(YDR131C) complex containing CDC53, SKP1, RBX1 and YDR131C.

Its subcellular location is the vacuole. It participates in protein modification; protein ubiquitination. Substrate recognition component of a SCF (SKP1-CUL1-F-box protein) E3 ubiquitin-protein ligase complex which mediates the ubiquitination and subsequent proteasomal degradation of target proteins. Probably recognizes and binds to phosphorylated target proteins. The chain is F-box protein YDR131C from Saccharomyces cerevisiae (strain ATCC 204508 / S288c) (Baker's yeast).